Consider the following 187-residue polypeptide: Hypoxanthine/guanine phosphoribosyltransferase (187 aa).

Belongs to the purine/pyrimidine phosphoribosyltransferase family. Archaeal HPRT subfamily. In terms of assembly, homodimer.

It is found in the cytoplasm. It carries out the reaction IMP + diphosphate = hypoxanthine + 5-phospho-alpha-D-ribose 1-diphosphate. It catalyses the reaction GMP + diphosphate = guanine + 5-phospho-alpha-D-ribose 1-diphosphate. Its pathway is purine metabolism; IMP biosynthesis via salvage pathway; IMP from hypoxanthine: step 1/1. Catalyzes a salvage reaction resulting in the formation of IMP that is energically less costly than de novo synthesis. This chain is Hypoxanthine/guanine phosphoribosyltransferase, found in Ferroglobus placidus (strain DSM 10642 / AEDII12DO).